Consider the following 241-residue polypeptide: Probable transcriptional regulatory protein Rmet_0785 (241 aa).

It belongs to the TACO1 family.

The protein resides in the cytoplasm. This chain is Probable transcriptional regulatory protein Rmet_0785, found in Cupriavidus metallidurans (strain ATCC 43123 / DSM 2839 / NBRC 102507 / CH34) (Ralstonia metallidurans).